The chain runs to 1199 residues: DNA-directed RNA polymerase subunit beta' (1199 aa).

Zn(2+)-binding residues include C60, C62, C75, and C78. Mg(2+)-binding residues include D449, D451, and D453. C818, C892, C899, and C902 together coordinate Zn(2+).

The protein belongs to the RNA polymerase beta' chain family. As to quaternary structure, the RNAP catalytic core consists of 2 alpha, 1 beta, 1 beta' and 1 omega subunit. When a sigma factor is associated with the core the holoenzyme is formed, which can initiate transcription. Requires Mg(2+) as cofactor. Zn(2+) serves as cofactor.

The enzyme catalyses RNA(n) + a ribonucleoside 5'-triphosphate = RNA(n+1) + diphosphate. Its function is as follows. DNA-dependent RNA polymerase catalyzes the transcription of DNA into RNA using the four ribonucleoside triphosphates as substrates. This is DNA-directed RNA polymerase subunit beta' from Geobacillus kaustophilus (strain HTA426).